Consider the following 301-residue polypeptide: Ornithine carbamoyltransferase (301 aa).

Residues 53–56, Gln80, Arg104, and 131–134 contribute to the carbamoyl phosphate site; these read STRT and HPCQ. Residues Asn162, Asp221, and 225-226 each bind L-ornithine; that span reads SI. Carbamoyl phosphate contacts are provided by residues 260 to 261 and Arg288; that span reads CL.

Belongs to the aspartate/ornithine carbamoyltransferase superfamily. OTCase family.

The protein localises to the cytoplasm. It carries out the reaction carbamoyl phosphate + L-ornithine = L-citrulline + phosphate + H(+). Its pathway is amino-acid biosynthesis; L-arginine biosynthesis; L-arginine from L-ornithine and carbamoyl phosphate: step 1/3. In terms of biological role, reversibly catalyzes the transfer of the carbamoyl group from carbamoyl phosphate (CP) to the N(epsilon) atom of ornithine (ORN) to produce L-citrulline. This chain is Ornithine carbamoyltransferase, found in Cenarchaeum symbiosum (strain A).